A 61-amino-acid polypeptide reads, in one-letter code: Small ribosomal subunit protein uS14 (61 aa).

4 residues coordinate Zn(2+): C24, C27, C40, and C43.

This sequence belongs to the universal ribosomal protein uS14 family. Zinc-binding uS14 subfamily. In terms of assembly, part of the 30S ribosomal subunit. Contacts proteins S3 and S10. Requires Zn(2+) as cofactor.

Functionally, binds 16S rRNA, required for the assembly of 30S particles and may also be responsible for determining the conformation of the 16S rRNA at the A site. This chain is Small ribosomal subunit protein uS14, found in Streptococcus thermophilus (strain CNRZ 1066).